Reading from the N-terminus, the 264-residue chain is Thymidylate synthase (264 aa).

DUMP contacts are provided by residues R21 and 126 to 127; that span reads RR. The active-site Nucleophile is the C146. Residues 166 to 169, N177, and 207 to 209 contribute to the dUMP site; these read RSAD and HLY. D169 lines the (6R)-5,10-methylene-5,6,7,8-tetrahydrofolate pocket. A263 is a (6R)-5,10-methylene-5,6,7,8-tetrahydrofolate binding site.

Belongs to the thymidylate synthase family. Bacterial-type ThyA subfamily. In terms of assembly, homodimer.

The protein resides in the cytoplasm. The catalysed reaction is dUMP + (6R)-5,10-methylene-5,6,7,8-tetrahydrofolate = 7,8-dihydrofolate + dTMP. It participates in pyrimidine metabolism; dTTP biosynthesis. Functionally, catalyzes the reductive methylation of 2'-deoxyuridine-5'-monophosphate (dUMP) to 2'-deoxythymidine-5'-monophosphate (dTMP) while utilizing 5,10-methylenetetrahydrofolate (mTHF) as the methyl donor and reductant in the reaction, yielding dihydrofolate (DHF) as a by-product. This enzymatic reaction provides an intracellular de novo source of dTMP, an essential precursor for DNA biosynthesis. The sequence is that of Thymidylate synthase from Nitrobacter hamburgensis (strain DSM 10229 / NCIMB 13809 / X14).